Here is a 344-residue protein sequence, read N- to C-terminus: UDP-3-O-acylglucosamine N-acyltransferase (344 aa).

H248 functions as the Proton acceptor in the catalytic mechanism.

This sequence belongs to the transferase hexapeptide repeat family. LpxD subfamily. Homotrimer.

It catalyses the reaction a UDP-3-O-[(3R)-3-hydroxyacyl]-alpha-D-glucosamine + a (3R)-hydroxyacyl-[ACP] = a UDP-2-N,3-O-bis[(3R)-3-hydroxyacyl]-alpha-D-glucosamine + holo-[ACP] + H(+). The protein operates within bacterial outer membrane biogenesis; LPS lipid A biosynthesis. In terms of biological role, catalyzes the N-acylation of UDP-3-O-acylglucosamine using 3-hydroxyacyl-ACP as the acyl donor. Is involved in the biosynthesis of lipid A, a phosphorylated glycolipid that anchors the lipopolysaccharide to the outer membrane of the cell. The protein is UDP-3-O-acylglucosamine N-acyltransferase of Prochlorococcus marinus (strain MIT 9515).